A 436-amino-acid polypeptide reads, in one-letter code: AP-2 complex subunit mu-B (436 aa).

Residues 170 to 435 form the MHD domain; sequence RNELFLDVLE…IGRSGIYETR (266 aa). 3 residues coordinate a 1,2-diacyl-sn-glycero-3-phospho-(1D-myo-inositol-3,4,5-trisphosphate): K342, K346, and K355.

Belongs to the adaptor complexes medium subunit family. As to quaternary structure, adaptor protein complex 2 (AP-2) is a heterotetramer composed of two large adaptins (alpha-type subunit and beta-type subunit), a medium adaptin (mu-type subunit) and a small adaptin (sigma-type subunit).

The protein localises to the cell membrane. Its subcellular location is the membrane. The protein resides in the coated pit. Its function is as follows. Component of the adaptor complexes which link clathrin to receptors in coated vesicles. Clathrin-associated protein complexes are believed to interact with the cytoplasmic tails of membrane proteins, leading to their selection and concentration. AP50 is a subunit of the plasma membrane adaptor. The complex binds polyphosphoinositide-containing lipids. The polypeptide is AP-2 complex subunit mu-B (ap2m1b) (Danio rerio (Zebrafish)).